The chain runs to 728 residues: Double-strand break repair protein mre-11 (728 aa).

The span at 1-12 (MCGSDDSFDDFV) shows a compositional bias: acidic residues. Positions 1–45 (MCGSDDSFDDFVPDSQEPASSRTRNQDHLDDDEVPCSQRPDAAND) are disordered. Residues aspartate 73, histidine 75, aspartate 113, and asparagine 181 each contribute to the Mn(2+) site. Histidine 182 serves as the catalytic Proton donor. Mn(2+) contacts are provided by histidine 269, histidine 301, and histidine 303. Positions 601 to 728 (KNPVADVEME…PSKKRDLSFF (128 aa)) are disordered. Acidic residues predominate over residues 607–616 (VEMEEDEDDP). The segment covering 622–632 (PQSTSRTNYAS) has biased composition (polar residues). A compositionally biased stretch (acidic residues) spans 634–645 (SEDEVANSDEEM).

The protein belongs to the MRE11/RAD32 family. As to quaternary structure, component of the MRN complex composed of two heterodimers rad-50 and mre-11 associated with a single nbs-1. Mn(2+) serves as cofactor.

The protein resides in the nucleus. It is found in the chromosome. In terms of biological role, core component of the MRN complex, which plays a central role in double-strand break (DSB) repair, DNA recombination, maintenance of telomere integrity and meiosis. The MRN complex is involved in the repair of DNA double-strand breaks (DSBs) via homologous recombination (HR), an error-free mechanism which primarily occurs during S and G2 phases. The complex (1) mediates the end resection of damaged DNA, which generates proper single-stranded DNA, a key initial steps in HR, and is (2) required for the recruitment of other repair factors and efficient activation of ATM and ATR upon DNA damage. Within the MRN complex, mre-11 possesses both single-strand endonuclease activity and double-strand-specific 3'-5' exonuclease activity. Mre-11 first endonucleolytically cleaves the 5' strand at DNA DSB ends to prevent non-homologous end joining (NHEJ) and licence HR. It then generates a single-stranded DNA gap via 3' to 5' exonucleolytic degradation, which is required for single-strand invasion and recombination. Required for meiotic crossing over and chiasma formation. Pachytene morphology and homolog pairing are normal. Vital in long term for maintenance of reproductive capacity of subsequent generations. The protein is Double-strand break repair protein mre-11 of Caenorhabditis elegans.